The primary structure comprises 726 residues: MIRGILLLLLGTTRFSPIQCISNDVYFKMFSQQAPPEDPCYNKAHEPRACIPDFVNAAYDAPVVASSTCGSSGAQRYCEYQDHERSCHTCDMTDPLRSFPARSLTDLNNSNNVTCWRSEPVTGSGDNVTLTLSLGKKFELTYVILQLCPHAPRPDSMVIYKSTDHGLSWQPFQFFSSQCRRLFGRPARQSTGRHNEHEARCSDVTRPLVSRIAFSTLEGRPSSRDLDSSPVLQDWVTATDIRVVFHRLQRPDPQALLSLEAGGATDLASGKYSVPLANGPAGNNIEANLGGDVATSGSGLHYAISDFSVGGRCKCNGHASKCSTDASGQLNCECSHNTAGRDCERCKPFHFDRPWARATAKEANECKECNCNKHARQCRFNMEIFRLSQGVSGGVCQNCRHSTTGRNCHQCKEGFYRDATKPLTHRKVCKACDCHPIGSSGKICNSTSGQCPCKDGVTGLTCNRCARGYQQSRSHIAPCIKQPPRMINMLDTQNTAPEPDEPESSPGSGGDRNGAAGMAAQSQYYRTEGGRECGKCRVSTKRLNLNKFCKRDYAIMAKVIGRDTSSEAVSREVQRRAMDPDVADYEMDQVQPGSARSPITGVYEFQAADYPNPNPNPRGSEMERFDLQIQAVFKRSRPGESSGAGNVYGMPNTTLKRGPMTWIIPTKDLECRCPRIRVNRSYLILGRDSEAPPGYLGIGPHSIVIEWKEDWYRRMKRFQRRARTCA.

The first 29 residues, 1 to 29 (MIRGILLLLLGTTRFSPIQCISNDVYFKM), serve as a signal peptide directing secretion. The 267-residue stretch at 46 to 312 (EPRACIPDFV…AISDFSVGGR (267 aa)) folds into the Laminin N-terminal domain. N-linked (GlcNAc...) asparagine glycosylation is found at asparagine 108, asparagine 112, and asparagine 127. 12 disulfide bridges follow: cysteine 313/cysteine 322, cysteine 315/cysteine 332, cysteine 334/cysteine 343, cysteine 346/cysteine 366, cysteine 369/cysteine 378, cysteine 371/cysteine 396, cysteine 399/cysteine 408, cysteine 411/cysteine 429, cysteine 432/cysteine 444, cysteine 434/cysteine 451, cysteine 453/cysteine 462, and cysteine 465/cysteine 479. Laminin EGF-like domains lie at 313 to 368 (CKCN…ECKE), 369 to 431 (CNCN…VCKA), and 432 to 481 (CDCH…PCIK). The N-linked (GlcNAc...) asparagine glycan is linked to asparagine 445. Positions 490 to 516 (LDTQNTAPEPDEPESSPGSGGDRNGAA) are disordered. 2 cysteine pairs are disulfide-bonded: cysteine 533–cysteine 671 and cysteine 549–cysteine 725. Positions 533–725 (CGKCRVSTKR…KRFQRRARTC (193 aa)) constitute an NTR domain. 2 N-linked (GlcNAc...) asparagine glycosylation sites follow: asparagine 652 and asparagine 679.

As to expression, at the midline of developing CNS at the time of commissure formation and in different subsets of neurons, muscles, and epidermal patches.

The protein resides in the secreted. The protein localises to the extracellular space. Its subcellular location is the extracellular matrix. In terms of biological role, netrins control guidance of CNS commissural axons at the midline and peripheral motor axons to their target muscles. The polypeptide is Netrin-A (NetA) (Drosophila melanogaster (Fruit fly)).